We begin with the raw amino-acid sequence, 248 residues long: Proteasome subunit alpha (248 aa).

The interval 229–248 (LLEADGATTEAESSAEEEDE) is disordered.

It belongs to the peptidase T1A family. As to quaternary structure, the 20S proteasome core is composed of 14 alpha and 14 beta subunits that assemble into four stacked heptameric rings, resulting in a barrel-shaped structure. The two inner rings, each composed of seven catalytic beta subunits, are sandwiched by two outer rings, each composed of seven alpha subunits. The catalytic chamber with the active sites is on the inside of the barrel. Has a gated structure, the ends of the cylinder being occluded by the N-termini of the alpha-subunits. Is capped by the proteasome-associated ATPase, ARC.

The protein localises to the cytoplasm. The protein operates within protein degradation; proteasomal Pup-dependent pathway. The formation of the proteasomal ATPase ARC-20S proteasome complex, likely via the docking of the C-termini of ARC into the intersubunit pockets in the alpha-rings, may trigger opening of the gate for substrate entry. Interconversion between the open-gate and close-gate conformations leads to a dynamic regulation of the 20S proteasome proteolysis activity. Its function is as follows. Component of the proteasome core, a large protease complex with broad specificity involved in protein degradation. This is Proteasome subunit alpha from Streptomyces scabiei (strain 87.22).